A 108-amino-acid chain; its full sequence is Peptidyl-prolyl cis-trans isomerase FKBP1B (108 aa).

Residues 20-108 enclose the PPIase FKBP-type domain; sequence GQTCVVHYTG…IFGVELLNLE (89 aa).

The protein belongs to the FKBP-type PPIase family. FKBP1 subfamily. As to quaternary structure, identified in a complex composed of RYR2, FKBP1B, PKA catalytic subunit, PRKAR2A, AKAP6, and the protein phosphatases PP2A and PP1. Interacts directly with RYR2.

The protein resides in the cytoplasm. It is found in the sarcoplasmic reticulum. The catalysed reaction is [protein]-peptidylproline (omega=180) = [protein]-peptidylproline (omega=0). Its activity is regulated as follows. Inhibited by both FK506 and rapamycin. Has the potential to contribute to the immunosuppressive and toxic effects of FK506 and rapamycin. PPIases accelerate the folding of proteins. It catalyzes the cis-trans isomerization of proline imidic peptide bonds in oligopeptides. This is Peptidyl-prolyl cis-trans isomerase FKBP1B (FKBP1B) from Oryctolagus cuniculus (Rabbit).